Here is an 84-residue protein sequence, read N- to C-terminus: UPF0473 protein CLJ_B2791 (84 aa).

This sequence belongs to the UPF0473 family.

The chain is UPF0473 protein CLJ_B2791 from Clostridium botulinum (strain 657 / Type Ba4).